A 155-amino-acid polypeptide reads, in one-letter code: Ribosome maturation factor RimP (155 aa).

Belongs to the RimP family.

It is found in the cytoplasm. Its function is as follows. Required for maturation of 30S ribosomal subunits. The sequence is that of Ribosome maturation factor RimP from Prochlorococcus marinus (strain MIT 9312).